The chain runs to 338 residues: Glycerol-3-phosphate dehydrogenase [NAD(P)+] (338 aa).

The NADPH site is built by Ser-13, Trp-14, and Lys-108. Residues Lys-108, Gly-139, and Ser-141 each coordinate sn-glycerol 3-phosphate. Ala-143 provides a ligand contact to NADPH. Sn-glycerol 3-phosphate contacts are provided by Lys-194, Asp-247, Ser-257, Arg-258, and Asn-259. Residue Lys-194 is the Proton acceptor of the active site. Arg-258 contributes to the NADPH binding site. Residues Val-282 and Glu-284 each coordinate NADPH.

This sequence belongs to the NAD-dependent glycerol-3-phosphate dehydrogenase family.

The protein resides in the cytoplasm. The enzyme catalyses sn-glycerol 3-phosphate + NAD(+) = dihydroxyacetone phosphate + NADH + H(+). The catalysed reaction is sn-glycerol 3-phosphate + NADP(+) = dihydroxyacetone phosphate + NADPH + H(+). The protein operates within membrane lipid metabolism; glycerophospholipid metabolism. Its function is as follows. Catalyzes the reduction of the glycolytic intermediate dihydroxyacetone phosphate (DHAP) to sn-glycerol 3-phosphate (G3P), the key precursor for phospholipid synthesis. This is Glycerol-3-phosphate dehydrogenase [NAD(P)+] from Streptococcus pneumoniae (strain CGSP14).